Consider the following 192-residue polypeptide: Peptidyl-tRNA hydrolase (192 aa).

Residue Tyr-17 coordinates tRNA. Catalysis depends on His-22, which acts as the Proton acceptor. Phe-68, Asn-70, and Asn-116 together coordinate tRNA.

This sequence belongs to the PTH family. Monomer.

Its subcellular location is the cytoplasm. The enzyme catalyses an N-acyl-L-alpha-aminoacyl-tRNA + H2O = an N-acyl-L-amino acid + a tRNA + H(+). Hydrolyzes ribosome-free peptidyl-tRNAs (with 1 or more amino acids incorporated), which drop off the ribosome during protein synthesis, or as a result of ribosome stalling. In terms of biological role, catalyzes the release of premature peptidyl moieties from peptidyl-tRNA molecules trapped in stalled 50S ribosomal subunits, and thus maintains levels of free tRNAs and 50S ribosomes. This Buchnera aphidicola subsp. Cinara cedri (strain Cc) protein is Peptidyl-tRNA hydrolase.